We begin with the raw amino-acid sequence, 338 residues long: Ketol-acid reductoisomerase (NADP(+)) (338 aa).

Positions 1 to 181 (MKVFYDKDAD…GGGRAGIIET (181 aa)) constitute a KARI N-terminal Rossmann domain. Residues 24 to 27 (YGSQ), R47, and S52 contribute to the NADP(+) site. H107 is a catalytic residue. G133 is a binding site for NADP(+). A KARI C-terminal knotted domain is found at 182 to 327 (NFREETETDL…SKLRAMMPWI (146 aa)). Positions 190, 194, 226, and 230 each coordinate Mg(2+). S251 contacts substrate.

This sequence belongs to the ketol-acid reductoisomerase family. Mg(2+) is required as a cofactor.

The enzyme catalyses (2R)-2,3-dihydroxy-3-methylbutanoate + NADP(+) = (2S)-2-acetolactate + NADPH + H(+). It catalyses the reaction (2R,3R)-2,3-dihydroxy-3-methylpentanoate + NADP(+) = (S)-2-ethyl-2-hydroxy-3-oxobutanoate + NADPH + H(+). The protein operates within amino-acid biosynthesis; L-isoleucine biosynthesis; L-isoleucine from 2-oxobutanoate: step 2/4. It functions in the pathway amino-acid biosynthesis; L-valine biosynthesis; L-valine from pyruvate: step 2/4. Involved in the biosynthesis of branched-chain amino acids (BCAA). Catalyzes an alkyl-migration followed by a ketol-acid reduction of (S)-2-acetolactate (S2AL) to yield (R)-2,3-dihydroxy-isovalerate. In the isomerase reaction, S2AL is rearranged via a Mg-dependent methyl migration to produce 3-hydroxy-3-methyl-2-ketobutyrate (HMKB). In the reductase reaction, this 2-ketoacid undergoes a metal-dependent reduction by NADPH to yield (R)-2,3-dihydroxy-isovalerate. This is Ketol-acid reductoisomerase (NADP(+)) from Burkholderia thailandensis (strain ATCC 700388 / DSM 13276 / CCUG 48851 / CIP 106301 / E264).